Here is a 452-residue protein sequence, read N- to C-terminus: uncharacterized protein (452 aa).

The segment at 1 to 452 (MTAVSSNRNP…LRKPEADTAL (452 aa)) is disordered. Polar residues-rich tracts occupy residues 29–41 (RTGTPRTTAVSSN), 95–111 (SPQTGTPRTTAVSSNRN), 129–144 (SPQTGTPGTTAVSSNR), and 163–176 (SPQTGTPGTTAVSS). Residues 177–193 (NRDHEDDGCLLKQESRG) show a composition bias toward basic and acidic residues. Composition is skewed to polar residues over residues 197–212 (SPQTGTPGTTAVSSNR), 231–245 (SPQTGTPGTTAVSSN), 265–280 (SPQTGTPRTTAVSSNR), 299–314 (SPQTGIPRTTAVSSNR), 333–347 (SPQTGTTRTTAVSSK), 376–394 (TAVSSNRDPRTTAVSSNRN), and 412–426 (SPQTGTPGTTAVSSN). A compositionally biased stretch (basic and acidic residues) spans 439–452 (EPQELRKPEADTAL).

This is an uncharacterized protein from Homo sapiens (Human).